We begin with the raw amino-acid sequence, 322 residues long: tRNA uridine(34) hydroxylase (322 aa).

The 95-residue stretch at 126 to 220 (LAEDTVVIDA…YGKDPEVKGE (95 aa)) folds into the Rhodanese domain. C180 (cysteine persulfide intermediate) is an active-site residue.

The protein belongs to the TrhO family.

The enzyme catalyses uridine(34) in tRNA + AH2 + O2 = 5-hydroxyuridine(34) in tRNA + A + H2O. Catalyzes oxygen-dependent 5-hydroxyuridine (ho5U) modification at position 34 in tRNAs. This chain is tRNA uridine(34) hydroxylase, found in Shouchella clausii (strain KSM-K16) (Alkalihalobacillus clausii).